The chain runs to 409 residues: bZIP transcription factor 16 (409 aa).

The span at 1–16 (MASNEMEKSSKEKEPK) shows a compositional bias: basic and acidic residues. Disordered regions lie at residues 1 to 63 (MASN…VASS), 118 to 236 (NGMT…LPVS), 274 to 327 (MHGK…LRKQ), and 362 to 409 (TTEN…KDST). A compositionally biased stretch (low complexity) spans 24–34 (APPSSQEPSSA). Residues 133-145 (GDAKQSEVKEKLP) are compositionally biased toward basic and acidic residues. The span at 152–178 (SLGSLNMITGKNNEPGKNSGASANGAY) shows a compositional bias: polar residues. The span at 179–203 (SKSGESASDGSSEGSDGNSQNDSGS) shows a compositional bias: low complexity. A compositionally biased stretch (polar residues) spans 216 to 228 (NGGSANGPQNGSA). In terms of domain architecture, bZIP spans 305-368 (ELKRQRRKQS…EELTTENTSL (64 aa)). The short motif at 307 to 323 (KRQRRKQSNRESARRSR) is the Bipartite nuclear localization signal element. The tract at residues 307 to 326 (KRQRRKQSNRESARRSRLRK) is basic motif. Residues 314–327 (SNRESARRSRLRKQ) show a composition bias toward basic and acidic residues. Residues 333–368 (LAQRAEVLNEENTNLRAEINKLKSQCEELTTENTSL) form a leucine-zipper region. A compositionally biased stretch (basic and acidic residues) spans 398-409 (AERKVDSYKDST).

Belongs to the bZIP family. In terms of assembly, monomer, homodimer and heterodimers with BZIP68 and GBF1/BZIP41. Heterodimers with GBF2/BZIP54 and GBF3/BZIP55. Binds DNA as monomer and forms homo- and heterodimers. The monomeric form is redox regulated. Interacts with GIP1.

The protein resides in the nucleus. Functionally, transcriptional activator that binds to the G-box motif (5'-CACGTG-3') and other cis-acting elements with 5'-ACGT-3' core, such as Hex, C-box and as-1 motifs. Possesses high binding affinity to G-box, much lower affinity to Hex and C-box, and little affinity to as-1 element. G-box and G-box-like motifs are cis-acting elements defined in promoters of certain plant genes which are regulated by such diverse stimuli as light-induction or hormone control. Binds to the G-box motif 5'-CACGTG-3' of LHCB2.4 (At3g27690) promoter. May act as transcriptional repressor in light-regulated expression of LHCB2.4. Binds DNA as monomer. DNA-binding activity is redox-dependent. In Arabidopsis thaliana (Mouse-ear cress), this protein is bZIP transcription factor 16.